Consider the following 711-residue polypeptide: Ferric reductase transmembrane component 3 (711 aa).

An N-terminal signal peptide occupies residues 1 to 20; it reads MYWVLLCGSILLCCLSGASA. Residues 21–166 are Extracellular-facing; sequence SPAKTKMYGK…YANYDIGHTY (146 aa). Asn85, Asn108, Asn120, and Asn134 each carry an N-linked (GlcNAc...) asparagine glycan. A helical transmembrane segment spans residues 167–187; it reads GGIICAYFVGVMILASILHYL. Residues 188–237 lie on the Cytoplasmic side of the membrane; it reads SYTPFKTALFKQRLVRYVRRYLTIPTIWGKHASSFSYLKIFTGFLPTRSE. Residues 238–258 form a helical membrane-spanning segment; sequence GVIILGYLVLHTVFLAYGYQY. The Extracellular portion of the chain corresponds to 259 to 280; the sequence is DPYNLIFDSRREQIARYVADRS. The region spanning 280–414 is the Ferric oxidoreductase domain; sequence SGVLAFAHFP…SGIEWIYAAI (135 aa). Residues 281–301 traverse the membrane as a helical segment; sequence GVLAFAHFPLIALFAGRNNFL. Residues 302–321 are Cytoplasmic-facing; sequence EFISGVKYTSFIMFHKWLGR. The heme site is built by His316 and His330. A helical membrane pass occupies residues 322-341; that stretch reads MMFLDAVIHGAAYTSYSVFY. At 342–353 the chain is on the extracellular side; sequence KDWAASKEETYW. Residues 354–374 form a helical membrane-spanning segment; the sequence is QFGVAALCIVGVMVFFSLAMF. The Cytoplasmic segment spans residues 375–376; it reads RK. A helical membrane pass occupies residues 377 to 397; sequence FFYEAFLFLHIVLGALFFYTC. His386 contributes to the heme binding site. A topological domain (extracellular) is located at residue Trp398. The chain crosses the membrane as a helical span at residues 399-419; that stretch reads EHVVELSGIEWIYAAIAIWTI. Residue His400 participates in heme binding. Residues 415–534 enclose the FAD-binding FR-type domain; that stretch reads AIWTIDRLIR…EGPYGSSSPV (120 aa). Residues 420–711 are Cytoplasmic-facing; the sequence is DRLIRIVRVS…IEYFEEYQSW (292 aa). 479 to 485 contributes to the FAD binding site; the sequence is HPFTVLD. NADP(+) is bound by residues 526-529 and 677-678; these read GPYG and CG.

The protein belongs to the ferric reductase (FRE) family. Requires FAD as cofactor. Heme is required as a cofactor.

It localises to the cell membrane. The enzyme catalyses 2 a Fe(II)-siderophore + NADP(+) + H(+) = 2 a Fe(III)-siderophore + NADPH. Its function is as follows. Siderophore-iron reductase responsible for reducing extracellular iron prior to import. Catalyzes the reductive uptake of Fe(3+) bound to di- and trihydroxamate siderophores. Fe(3+) is reduced to Fe(2+), which then dissociates from the siderophore and can be imported by the high-affinity Fe(2+) transport complex in the plasma membrane. The protein is Ferric reductase transmembrane component 3 (FRE3) of Saccharomyces cerevisiae (strain ATCC 204508 / S288c) (Baker's yeast).